The sequence spans 359 residues: Bergaptol O-methyltransferase (359 aa).

Histidine 126 lines the bergaptol pocket. Residues serine 179, glycine 203, aspartate 226, aspartate 246, and lysine 260 each coordinate S-adenosyl-L-homocysteine. Histidine 264 is a bergaptol binding site. Histidine 264 serves as the catalytic Proton acceptor.

Belongs to the class I-like SAM-binding methyltransferase superfamily. Cation-independent O-methyltransferase family. COMT subfamily.

The enzyme catalyses a 5-hydroxyfurocoumarin + S-adenosyl-L-methionine = a 5-methoxyfurocoumarin + S-adenosyl-L-homocysteine + H(+). The catalysed reaction is bergaptol + S-adenosyl-L-methionine = bergapten + S-adenosyl-L-homocysteine. With respect to regulation, inhibited by Cu(2+), Ni(2+) and Co(2+). This is Bergaptol O-methyltransferase from Glehnia littoralis (Beach silvertop).